The sequence spans 277 residues: Proteasome assembly chaperone 1 (277 aa).

Belongs to the PSMG1 family. As to quaternary structure, forms a heterodimer with psmg2. In terms of processing, degraded by the proteasome upon completion of 20S proteasome maturation.

It is found in the cytoplasm. The protein resides in the endoplasmic reticulum. Its function is as follows. Chaperone protein which promotes assembly of the 20S proteasome as part of a heterodimer with psmg2. The chain is Proteasome assembly chaperone 1 from Danio rerio (Zebrafish).